Here is an 892-residue protein sequence, read N- to C-terminus: Putative ubiquitin carboxyl-terminal hydrolase 11 (892 aa).

Residues 17–132 (YTPEEERRIV…GGPPVPRKLI (116 aa)) form the DUSP domain. Positions 69–89 (EPSEVTRPGPIDNHDIIDSES) are disordered. Residues 301–880 (GGLQNLGNTC…AAYVLFYQRV (580 aa)) form the USP domain. C310 functions as the Nucleophile in the catalytic mechanism. The interval 636–660 (NSGNENGHVPDESSRSILSRDTETE) is disordered. The segment covering 643-657 (HVPDESSRSILSRDT) has biased composition (basic and acidic residues). Residue H838 is the Proton acceptor of the active site.

The protein belongs to the peptidase C19 family.

The enzyme catalyses Thiol-dependent hydrolysis of ester, thioester, amide, peptide and isopeptide bonds formed by the C-terminal Gly of ubiquitin (a 76-residue protein attached to proteins as an intracellular targeting signal).. Functionally, recognizes and hydrolyzes the peptide bond at the C-terminal Gly of ubiquitin. Involved in the processing of poly-ubiquitin precursors as well as that of ubiquitinated proteins. The polypeptide is Putative ubiquitin carboxyl-terminal hydrolase 11 (UBP11) (Arabidopsis thaliana (Mouse-ear cress)).